A 484-amino-acid chain; its full sequence is Cobyric acid synthase (484 aa).

The 188-residue stretch at A251–Y438 folds into the GATase cobBQ-type domain. C333 (nucleophile) is an active-site residue. H430 is an active-site residue.

Belongs to the CobB/CobQ family. CobQ subfamily.

The protein operates within cofactor biosynthesis; adenosylcobalamin biosynthesis. Its function is as follows. Catalyzes amidations at positions B, D, E, and G on adenosylcobyrinic A,C-diamide. NH(2) groups are provided by glutamine, and one molecule of ATP is hydrogenolyzed for each amidation. This chain is Cobyric acid synthase, found in Rhizobium rhizogenes (strain K84 / ATCC BAA-868) (Agrobacterium radiobacter).